Reading from the N-terminus, the 464-residue chain is Glutamate--tRNA ligase (464 aa).

The short motif at 11-21 (PSPTGFIHLGN) is the 'HIGH' region element. A 'KMSKS' region motif is present at residues 243–247 (KMSKR). K246 contacts ATP.

Belongs to the class-I aminoacyl-tRNA synthetase family. Glutamate--tRNA ligase type 1 subfamily. Monomer.

Its subcellular location is the cytoplasm. The enzyme catalyses tRNA(Glu) + L-glutamate + ATP = L-glutamyl-tRNA(Glu) + AMP + diphosphate. Its function is as follows. Catalyzes the attachment of glutamate to tRNA(Glu) in a two-step reaction: glutamate is first activated by ATP to form Glu-AMP and then transferred to the acceptor end of tRNA(Glu). This is Glutamate--tRNA ligase from Polaromonas naphthalenivorans (strain CJ2).